The following is a 445-amino-acid chain: Interferon-activable protein 202 (445 aa).

Residues 1–27 (MSNRNLRSSTNSEFSEGQHQTPSSDSS) are compositionally biased toward polar residues. Residues 1–57 (MSNRNLRSSTNSEFSEGQHQTPSSDSSGHGEDQPQASPGPNKKSHTPKKNISKGAVL) form a disordered region. Over residues 42-51 (KKSHTPKKNI) the composition is skewed to basic residues. HIN-200 domains are found at residues 46 to 243 (TPKK…IKGE) and 244 to 441 (KLLK…MEVI). 2 required for homomultimerization regions span residues 82 to 89 (MFHATVAT) and 281 to 288 (MFHATVAT).

It belongs to the HIN-200 family. Homomultimer; homotetramerizes (via HIN-200 domain 2), enhancing affinity for double-stranded DNA (dsDNA). Interacts (via HIN-200 domain 2) with AIM2 (via HIN-200 domain); preventing activation of the AIM2 inflammasome. Binds to several transcription factors, including NF-kappa-B p50 (NFKB1) and p65 (RELA), FOS, JUN, E2F1, E2F4, MYOD1 and myogenin. Also binds TP53/p53, the hypophosphorylated, growth-inhibitory form of the retinoblastoma protein and the p53-binding protein 1 (TP53BP1). In terms of processing, phosphorylated.

It is found in the cytoplasm. The protein resides in the nucleus. Functionally, DNA-binding protein involved in innate immune response and has anti-inflammatory activity. Inhibits caspase activation in response to cytosolic DNA by preventing activation of the AIM2 inflammasome, probably by sequestering cytoplasmic DNA and preventing its being bound by AIM2. Also inhibits activation of the AIM2 inflammasome via a direct interaction with AIM2, which prevents the interaction between AIM2 and PYCARD and formation of the AIM2 inflammasome. Binds double-stranded DNA (dsDNA) in the cytosol. Has anti-apoptotic effects due to inhibition of the transcriptional activity of TP53/p53. Inhibits the transcriptional activity of several transcription factors, including NF-kappa-B p50 and p65, FOS, JUN, E2F1, E2F4, MYOD1 and myogenin. This chain is Interferon-activable protein 202, found in Mus musculus (Mouse).